A 562-amino-acid chain; its full sequence is Putative transport protein Spro_1639 (562 aa).

The next 5 helical transmembrane spans lie at 8–28 (LLNG…LCLG), 37–57 (LGNS…HFAI), 66–86 (FMLF…SIFF), 94–114 (MLAL…GKLF), and 158–178 (HLSL…IFGA). RCK C-terminal domains follow at residues 202–288 (LDTD…SFRN) and 290–373 (KEVF…KIGF). The next 5 membrane-spanning stretches (helical) occupy residues 383–403 (LLAF…TIQF), 406–426 (FSFG…LGFL), 447–467 (FGLM…IGNS), 475–495 (MLIA…LFGA), and 541–561 (IANV…PGIL).

The protein belongs to the AAE transporter (TC 2.A.81) family. YbjL subfamily.

The protein resides in the cell membrane. This chain is Putative transport protein Spro_1639, found in Serratia proteamaculans (strain 568).